We begin with the raw amino-acid sequence, 351 residues long: Methionine import ATP-binding protein MetN (351 aa).

Positions 2–238 (IKLNHINKTY…PKHPITRELI (237 aa)) constitute an ABC transporter domain. Position 35 to 42 (35 to 42 (GYSGAGKS)) interacts with ATP.

This sequence belongs to the ABC transporter superfamily. Methionine importer (TC 3.A.1.24) family. As to quaternary structure, the complex is composed of two ATP-binding proteins (MetN), two transmembrane proteins (MetI) and a solute-binding protein (MetQ).

Its subcellular location is the cell inner membrane. The catalysed reaction is L-methionine(out) + ATP + H2O = L-methionine(in) + ADP + phosphate + H(+). It catalyses the reaction D-methionine(out) + ATP + H2O = D-methionine(in) + ADP + phosphate + H(+). In terms of biological role, part of the ABC transporter complex MetNIQ involved in methionine import. Responsible for energy coupling to the transport system. The protein is Methionine import ATP-binding protein MetN of Helicobacter hepaticus (strain ATCC 51449 / 3B1).